We begin with the raw amino-acid sequence, 77 residues long: Putative ankyrin repeat protein RC0956 (77 aa).

An ANK repeat occupies 8–38; that stretch reads TDISPLMLASEYGQVTIVKYLLKHGNYNVKG.

In Rickettsia conorii (strain ATCC VR-613 / Malish 7), this protein is Putative ankyrin repeat protein RC0956.